Here is a 981-residue protein sequence, read N- to C-terminus: Polyhomeotic-like protein 3 (981 aa).

Positions 1–28 (MDSEPSSGTSVSTTASSTTTTTITTSSS) are enriched in low complexity. 4 disordered regions span residues 1–33 (MDSE…MQQP), 102–127 (LSSG…TSIL), 224–280 (LSSS…TAVT), and 307–407 (QIPL…SQSP). Residues 224–255 (LSSSQNGSPKSAGQTQSLTICHNKTTVTSSKI) are compositionally biased toward polar residues. Phosphoserine is present on residues serine 231, serine 261, serine 269, and serine 312. Positions 256 to 266 (SQRDPSPESKK) are enriched in basic and acidic residues. Residues 321–340 (QLLLQQQQQQIQPITLQSPS) are compositionally biased toward low complexity. Over residues 360 to 373 (APSNAQPQHCSPVQ) the composition is skewed to polar residues. Positions 381-395 (VSPNQAQSAQQSVVV) are enriched in low complexity. Residues threonine 607 and threonine 612 each carry the phosphothreonine modification. Serine 614 carries the phosphoserine modification. The interval 650-690 (KSPSDPTHASAPAPPLLIPAASTRSSSTSLASSTPSLENKP) is disordered. Residues 667–686 (IPAASTRSSSTSLASSTPSL) are compositionally biased toward low complexity. Residues lysine 689 and lysine 730 each participate in a glycyl lysine isopeptide (Lys-Gly) (interchain with G-Cter in SUMO2) cross-link. The HD1 signature appears at 689–718 (KPPQAIVKPQILTHVIEGFVIQEGLEPFPV). Serine 759 and serine 760 each carry phosphoserine. Residues 774–808 (EEMDSELLKCEFCGKMGYPNEFLRSKRFCTMSCAK) form an FCS-type zinc finger. Zn(2+) contacts are provided by cysteine 783, cysteine 786, cysteine 802, and cysteine 806. A Glycyl lysine isopeptide (Lys-Gly) (interchain with G-Cter in SUMO2) cross-link involves residue lysine 808. Disordered regions lie at residues 825–844 (RKPD…GPEG) and 863–888 (EDVA…ERER). The SAM domain maps to 917–981 (WTVDDVWAFI…CARINSLKDS (65 aa)).

Component of a PRC1-like complex. As to expression, ubiquitous expression.

The protein localises to the nucleus. Its function is as follows. Component of a Polycomb group (PcG) multiprotein PRC1-like complex, a complex class required to maintain the transcriptionally repressive state of many genes, including Hox genes, throughout development. PcG PRC1 complex acts via chromatin remodeling and modification of histones; it mediates monoubiquitination of histone H2A 'Lys-119', rendering chromatin heritably changed in its expressibility. The polypeptide is Polyhomeotic-like protein 3 (Phc3) (Mus musculus (Mouse)).